Here is a 226-residue protein sequence, read N- to C-terminus: ATP-dependent dethiobiotin synthetase BioD (226 aa).

ATP is bound at residue 12 to 17 (GVGKTV). Thr-16 contacts Mg(2+). Lys-37 is an active-site residue. Thr-41 lines the substrate pocket. Residues Asp-49, 108–111 (EGAG), 169–170 (GS), and 197–199 (PAG) contribute to the ATP site. Positions 49 and 108 each coordinate Mg(2+).

Belongs to the dethiobiotin synthetase family. Homodimer. The cofactor is Mg(2+).

It is found in the cytoplasm. The catalysed reaction is (7R,8S)-7,8-diammoniononanoate + CO2 + ATP = (4R,5S)-dethiobiotin + ADP + phosphate + 3 H(+). Its pathway is cofactor biosynthesis; biotin biosynthesis; biotin from 7,8-diaminononanoate: step 1/2. Functionally, catalyzes a mechanistically unusual reaction, the ATP-dependent insertion of CO2 between the N7 and N8 nitrogen atoms of 7,8-diaminopelargonic acid (DAPA, also called 7,8-diammoniononanoate) to form a ureido ring. The chain is ATP-dependent dethiobiotin synthetase BioD from Mycobacterium leprae (strain Br4923).